We begin with the raw amino-acid sequence, 640 residues long: Threonine--tRNA ligase (640 aa).

In terms of domain architecture, TGS spans 1–61 (MPTITLPDGS…ENDASLQIIT (61 aa)). The segment at 242 to 533 (DHRKIGKRLG…LIEHYEGAFP (292 aa)) is catalytic. Zn(2+)-binding residues include Cys-333, His-384, and His-510.

The protein belongs to the class-II aminoacyl-tRNA synthetase family. As to quaternary structure, homodimer. Zn(2+) serves as cofactor.

The protein localises to the cytoplasm. The catalysed reaction is tRNA(Thr) + L-threonine + ATP = L-threonyl-tRNA(Thr) + AMP + diphosphate + H(+). Its function is as follows. Catalyzes the attachment of threonine to tRNA(Thr) in a two-step reaction: L-threonine is first activated by ATP to form Thr-AMP and then transferred to the acceptor end of tRNA(Thr). Also edits incorrectly charged L-seryl-tRNA(Thr). The polypeptide is Threonine--tRNA ligase (Pseudomonas savastanoi pv. phaseolicola (strain 1448A / Race 6) (Pseudomonas syringae pv. phaseolicola (strain 1448A / Race 6))).